A 201-amino-acid chain; its full sequence is Lipopolysaccharide core heptose(II)-phosphate phosphatase (201 aa).

A signal peptide spans 1-35 (MLAFTLRFIKNKRYLATLAGALVIIAGLTSQHAWS).

It belongs to the phosphoglycerate mutase family. Ais subfamily.

The protein localises to the periplasm. It participates in bacterial outer membrane biogenesis; lipopolysaccharide metabolism. Catalyzes the dephosphorylation of heptose(II) of the outer membrane lipopolysaccharide core. The protein is Lipopolysaccharide core heptose(II)-phosphate phosphatase of Salmonella schwarzengrund (strain CVM19633).